The chain runs to 155 residues: SsrA-binding protein (155 aa).

It belongs to the SmpB family.

The protein resides in the cytoplasm. Required for rescue of stalled ribosomes mediated by trans-translation. Binds to transfer-messenger RNA (tmRNA), required for stable association of tmRNA with ribosomes. tmRNA and SmpB together mimic tRNA shape, replacing the anticodon stem-loop with SmpB. tmRNA is encoded by the ssrA gene; the 2 termini fold to resemble tRNA(Ala) and it encodes a 'tag peptide', a short internal open reading frame. During trans-translation Ala-aminoacylated tmRNA acts like a tRNA, entering the A-site of stalled ribosomes, displacing the stalled mRNA. The ribosome then switches to translate the ORF on the tmRNA; the nascent peptide is terminated with the 'tag peptide' encoded by the tmRNA and targeted for degradation. The ribosome is freed to recommence translation, which seems to be the essential function of trans-translation. This chain is SsrA-binding protein, found in Bacillus cytotoxicus (strain DSM 22905 / CIP 110041 / 391-98 / NVH 391-98).